We begin with the raw amino-acid sequence, 199 residues long: CASP-like protein 2B1 (199 aa).

The Cytoplasmic segment spans residues 1–26 (MSYLGVGLSPVNVAGTKMKLMDRKVR). The chain crosses the membrane as a helical span at residues 27 to 47 (LTELILRCSVCALALVAAILI). Over 48–69 (ATDTQVKEIFTIQKKAKYTDMK) the chain is Extracellular. A helical membrane pass occupies residues 70 to 90 (ALVFLVVVNGIAAAYSLLHMV). Residues 91–106 (RCVVGMMKGSVLFSKP) are Cytoplasmic-facing. A helical membrane pass occupies residues 107 to 127 (LAWAIFSGDQAIAYLTVAGVA). At 128–164 (AAAQSAAFAKLGEPELQWMKICTIYGKFCNQVGEGIA) the chain is on the extracellular side. A helical transmembrane segment spans residues 165–185 (TALLASIGMVLISSISAFALF). Residues 186–199 (RLYGGNKAQQGSRW) lie on the Cytoplasmic side of the membrane.

The protein belongs to the Casparian strip membrane proteins (CASP) family. Homodimer and heterodimers.

It localises to the cell membrane. The sequence is that of CASP-like protein 2B1 from Eutrema halophilum (Salt cress).